We begin with the raw amino-acid sequence, 102 residues long: uncharacterized protein (102 aa).

3 consecutive transmembrane segments (helical) span residues 1 to 21 (MVPL…LRPV), 42 to 62 (SIID…LILV), and 68 to 88 (SIHA…FSIV).

Its subcellular location is the membrane. This is an uncharacterized protein from Saccharomyces cerevisiae (strain ATCC 204508 / S288c) (Baker's yeast).